Here is a 136-residue protein sequence, read N- to C-terminus: Histone H3.3C-like (136 aa).

R3 is subject to Asymmetric dimethylarginine; by PRMT6; alternate. Position 3 is a citrulline; alternate (R3). Residue T4 is modified to Phosphothreonine; by HASPIN. K5 is subject to Allysine; alternate. Residue K5 is modified to N6,N6,N6-trimethyllysine; alternate. K5 is subject to N6,N6-dimethyllysine; alternate. K5 carries the post-translational modification N6-(2-hydroxyisobutyryl)lysine; alternate. K5 is subject to N6-(beta-hydroxybutyryl)lysine; alternate. At K5 the chain carries N6-acetyllysine; alternate. K5 carries the N6-methyllysine; alternate modification. T7 carries the post-translational modification Phosphothreonine; by PKC. N6,N6,N6-trimethyllysine; alternate is present on K10. N6,N6-dimethyllysine; alternate is present on K10. K10 bears the N6-(2-hydroxyisobutyryl)lysine; alternate mark. K10 is modified (N6-acetyllysine; alternate). Position 10 is an N6-methyllysine; alternate (K10). S11 carries the ADP-ribosylserine; alternate modification. S11 is modified (phosphoserine; alternate; by AURKB, AURKC, RPS6KA3, RPS6KA4 and RPS6KA5). T12 bears the Phosphothreonine; by PKC mark. The residue at position 15 (K15) is an N6-(2-hydroxyisobutyryl)lysine; alternate. N6-(beta-hydroxybutyryl)lysine; alternate is present on K15. K15 bears the N6-acetyllysine; alternate mark. An N6-glutaryllysine; alternate modification is found at K15. K15 carries the post-translational modification N6-succinyllysine; alternate. Residue R18 is modified to Citrulline; alternate. At R18 the chain carries Asymmetric dimethylarginine; by CARM1; alternate. An N6-(2-hydroxyisobutyryl)lysine; alternate mark is found at K19 and K28. K19 carries the post-translational modification N6-(beta-hydroxybutyryl)lysine; alternate. N6-acetyllysine; alternate occurs at positions 19 and 28. N6-methyllysine; alternate is present on residues K19 and K28. N6-glutaryllysine; alternate occurs at positions 19 and 28. N6-butyryllysine; alternate is present on K19. Residue K28 is modified to N6,N6,N6-trimethyllysine; alternate. K28 carries the N6,N6-dimethyllysine; alternate modification. S29 bears the ADP-ribosylserine; alternate mark. Residue S29 is modified to Phosphoserine; alternate; by AURKB, AURKC and RPS6KA5. S32 carries the phosphoserine modification. K38 bears the N6-methyllysine mark. Y42 carries the phosphotyrosine modification. K57 is subject to N6,N6,N6-trimethyllysine; alternate. K57 carries the post-translational modification N6-(2-hydroxyisobutyryl)lysine; alternate. Residue K57 is modified to N6-(beta-hydroxybutyryl)lysine; alternate. Residue K57 is modified to N6-acetyllysine; alternate. K57 is modified (N6-glutaryllysine; alternate). At K57 the chain carries N6-succinyllysine; alternate. Residue K57 is modified to N6-methyllysine; by EHMT2; alternate. A Phosphoserine modification is found at S58. An N6-(2-hydroxyisobutyryl)lysine; alternate mark is found at K65 and K80. 2 positions are modified to N6-methyllysine; alternate: K65 and K80. An N6,N6,N6-trimethyllysine; alternate modification is found at K80. K80 bears the N6,N6-dimethyllysine; alternate mark. K80 is modified (N6-acetyllysine; alternate). K80 is subject to N6-glutaryllysine; alternate. Position 80 is an N6-succinyllysine; alternate (K80). Phosphothreonine is present on T81. At S87 the chain carries Phosphoserine.

Belongs to the histone H3 family. In terms of assembly, the nucleosome is a histone octamer containing two molecules each of H2A, H2B, H3 and H4 assembled in one H3-H4 heterotetramer and two H2A-H2B heterodimers. The octamer wraps approximately 147 bp of DNA. In terms of processing, acetylation is generally linked to gene activation. Acetylation on Lys-19 favors methylation at Arg-18. Citrullination at Arg-18 by PADI4 impairs methylation and represses transcription. Post-translationally, asymmetric dimethylation at Arg-18 (H3R17me2a) by CARM1 is linked to gene activation. Asymmetric dimethylation at Arg-3 (H3R2me2a) by PRMT6 is linked to gene repression and is mutually exclusive with H3 Lys-5 methylation (H3K4me2 and H3K4me3). H3R2me2a is present at the 3' of genes regardless of their transcription state and is enriched on inactive promoters, while it is absent on active promoters. In terms of processing, methylation at Lys-5 (H3K4me) and Lys-80 (H3K79me) are linked to gene activation. Methylation at Lys-5 (H3K4me) facilitates subsequent acetylation of H3 and H4. Methylation at Lys-80 (H3K79me) is associated with DNA double-strand break (DSB) responses and is a specific target for TP53BP1. Methylation at Lys-10 (H3K9me) and Lys-28 (H3K27me) are linked to gene repression. Methylation at Lys-10 (H3K9me) is a specific target for HP1 proteins (CBX1, CBX3 and CBX5) and prevents subsequent phosphorylation at Ser-11 (H3S10ph) and acetylation of H3 and H4. Methylation at Lys-5 (H3K4me) and Lys-80 (H3K79me) require preliminary monoubiquitination of H2B at 'Lys-120'. Methylation at Lys-10 (H3K9me) and Lys-28 (H3K27me) are enriched in inactive X chromosome chromatin. Monomethylation at Lys-57 (H3K56me1) by EHMT2/G9A in G1 phase promotes interaction with PCNA and is required for DNA replication. Phosphorylated at Thr-4 (H3T3ph) by HASPIN during prophase and dephosphorylated during anaphase. Phosphorylation at Ser-11 (H3S10ph) by AURKB is crucial for chromosome condensation and cell-cycle progression during mitosis and meiosis. In addition phosphorylation at Ser-11 (H3S10ph) by RPS6KA4 and RPS6KA5 is important during interphase because it enables the transcription of genes following external stimulation, like mitogens, stress, growth factors or UV irradiation and result in the activation of genes, such as c-fos and c-jun. Phosphorylation at Ser-11 (H3S10ph), which is linked to gene activation, prevents methylation at Lys-10 (H3K9me) but facilitates acetylation of H3 and H4. Phosphorylation at Ser-11 (H3S10ph) by AURKB mediates the dissociation of HP1 proteins (CBX1, CBX3 and CBX5) from heterochromatin. Phosphorylation at Ser-11 (H3S10ph) is also an essential regulatory mechanism for neoplastic cell transformation. Phosphorylated at Ser-29 (H3S28ph) by MAP3K20 isoform 1, RPS6KA5 or AURKB during mitosis or upon ultraviolet B irradiation. Phosphorylation at Thr-7 (H3T6ph) by PRKCB is a specific tag for epigenetic transcriptional activation that prevents demethylation of Lys-5 (H3K4me) by LSD1/KDM1A. At centromeres, specifically phosphorylated at Thr-12 (H3T11ph) from prophase to early anaphase, by DAPK3 and PKN1. Phosphorylation at Thr-12 (H3T11ph) by PKN1 or isoform M2 of PKM (PKM2) is a specific tag for epigenetic transcriptional activation that promotes demethylation of Lys-10 (H3K9me) by KDM4C/JMJD2C. Phosphorylation at Tyr-42 (H3Y41ph) by JAK2 promotes exclusion of CBX5 (HP1 alpha) from chromatin. Post-translationally, lysine deamination at Lys-5 (H3K4all) to form allysine is mediated by LOXL2. Allysine formation by LOXL2 only takes place on H3K4me3 and results in gene repression. In terms of processing, butyrylation of histones marks active promoters and competes with histone acetylation. It is present during late spermatogenesis. Succinylation at Lys-80 (H3K79succ) by KAT2A takes place with a maximum frequency around the transcription start sites of genes. It gives a specific tag for epigenetic transcription activation. Post-translationally, serine ADP-ribosylation constitutes the primary form of ADP-ribosylation of proteins in response to DNA damage. Serine ADP-ribosylation at Ser-11 (H3S10ADPr) is mutually exclusive with phosphorylation at Ser-11 (H3S10ph) and impairs acetylation at Lys-10 (H3K9ac).

The protein resides in the nucleus. Its subcellular location is the chromosome. In terms of biological role, core component of nucleosome. Nucleosomes wrap and compact DNA into chromatin, limiting DNA accessibility to the cellular machineries which require DNA as a template. Histones thereby play a central role in transcription regulation, DNA repair, DNA replication and chromosomal stability. DNA accessibility is regulated via a complex set of post-translational modifications of histones, also called histone code, and nucleosome remodeling. The sequence is that of Histone H3.3C-like from Bos taurus (Bovine).